The primary structure comprises 231 residues: MQGQEDGDSILPFAKCSRVVSRFSPCSLPPQNRRPMPQPYGDAFWENLSQRSSSNWMVEQYIPPILRATDCSRPSLHPLEGLPPPEKLWRRKRKKLHLERMQKGPGSIPARVRAVTYHLEDLRRRQGIINELKRAQWGSSDATPELPALEEGFELLSTTKYFDVEEERATYPQKETYSVTPRDQLLWTPWTPVGQQGTYASGQLSSLTYSTATARKNPVYDPQAMELESEE.

Residues 75–99 (SLHPLEGLPPPEKLWRRKRKKLHLE) form an interaction with CCNA1 and CCNA1/CDK2 complex; essential for CDK2 inhibitory activity region. A Nuclear localization signal motif is present at residues 90–95 (RRKRKK). T180 carries the phosphothreonine modification.

Belongs to the INCA family. Interacts with CCNA1. Identified in a complex with CCNA1 and CDK2. Interacts with ZNF16; the interaction inhibits INCA1 activity and induces the cell cycle process. Interacts with SPACA9. Interacts with CCNA2, CCNB1 and CCNE1. Interacts with the CCNA1/CDK2 complex. Interacts with ING5, DAZAP2, RNF26, USP15, SPOUT1, DPH7, TRIM26 and RAB5C. In terms of processing, phosphorylated when part of a complex with CCNA1 and CDK2.

Its subcellular location is the nucleus. The protein resides in the cytoplasm. In terms of biological role, binds to CDK2-bound cyclins and inhibits the kinase activity of CDK2; binding to cyclins is critical for its function as CDK inhibitor. Inhibits cell growth and proliferation and may play a role in cell cycle control. Required for ING5-mediated regulation of S-phase progression, enhancement of Fas-induced apoptosis and inhibition of cell growth. The chain is Protein INCA1 (Inca1) from Mus musculus (Mouse).